The primary structure comprises 286 residues: Release factor glutamine methyltransferase (286 aa).

S-adenosyl-L-methionine-binding residues include Asp-136 and Asn-179. A substrate-binding site is contributed by 179-182 (NPPY).

This sequence belongs to the protein N5-glutamine methyltransferase family. PrmC subfamily.

It carries out the reaction L-glutaminyl-[peptide chain release factor] + S-adenosyl-L-methionine = N(5)-methyl-L-glutaminyl-[peptide chain release factor] + S-adenosyl-L-homocysteine + H(+). In terms of biological role, methylates the class 1 translation termination release factors RF1/PrfA and RF2/PrfB on the glutamine residue of the universally conserved GGQ motif. The sequence is that of Release factor glutamine methyltransferase from Borreliella burgdorferi (strain ATCC 35210 / DSM 4680 / CIP 102532 / B31) (Borrelia burgdorferi).